The primary structure comprises 439 residues: Ribosomal protein uS12 methylthiotransferase RimO (439 aa).

The MTTase N-terminal domain occupies 3–113; the sequence is HKVGFVSLGC…VVNAVHQHLP (111 aa). [4Fe-4S] cluster contacts are provided by C12, C48, C77, C144, C148, and C151. Residues 130-367 form the Radical SAM core domain; it reads LTPRHYAYLK…MQVQAEISRN (238 aa). The TRAM domain maps to 370 to 436; it reads KNKIGSTQTV…DYDLYGDLEY (67 aa).

The protein belongs to the methylthiotransferase family. RimO subfamily. The cofactor is [4Fe-4S] cluster.

The protein localises to the cytoplasm. It carries out the reaction L-aspartate(89)-[ribosomal protein uS12]-hydrogen + (sulfur carrier)-SH + AH2 + 2 S-adenosyl-L-methionine = 3-methylsulfanyl-L-aspartate(89)-[ribosomal protein uS12]-hydrogen + (sulfur carrier)-H + 5'-deoxyadenosine + L-methionine + A + S-adenosyl-L-homocysteine + 2 H(+). In terms of biological role, catalyzes the methylthiolation of an aspartic acid residue of ribosomal protein uS12. The polypeptide is Ribosomal protein uS12 methylthiotransferase RimO (Legionella pneumophila (strain Paris)).